A 212-amino-acid polypeptide reads, in one-letter code: N-(5'-phosphoribosyl)anthranilate isomerase (212 aa).

Belongs to the TrpF family.

The catalysed reaction is N-(5-phospho-beta-D-ribosyl)anthranilate = 1-(2-carboxyphenylamino)-1-deoxy-D-ribulose 5-phosphate. Its pathway is amino-acid biosynthesis; L-tryptophan biosynthesis; L-tryptophan from chorismate: step 3/5. The chain is N-(5'-phosphoribosyl)anthranilate isomerase from Microcystis aeruginosa (strain NIES-843 / IAM M-2473).